The sequence spans 467 residues: Chromosomal replication initiator protein DnaA (467 aa).

The segment at M1–S85 is domain I, interacts with DnaA modulators. The tract at residues S85 to S130 is domain II. The interval N131–A347 is domain III, AAA+ region. ATP contacts are provided by G175, G177, K178, and T179. Residues N348–S467 are domain IV, binds dsDNA.

Belongs to the DnaA family. In terms of assembly, oligomerizes as a right-handed, spiral filament on DNA at oriC.

The protein resides in the cytoplasm. Its function is as follows. Plays an essential role in the initiation and regulation of chromosomal replication. ATP-DnaA binds to the origin of replication (oriC) to initiate formation of the DNA replication initiation complex once per cell cycle. Binds the DnaA box (a 9 base pair repeat at the origin) and separates the double-stranded (ds)DNA. Forms a right-handed helical filament on oriC DNA; dsDNA binds to the exterior of the filament while single-stranded (ss)DNA is stabiized in the filament's interior. The ATP-DnaA-oriC complex binds and stabilizes one strand of the AT-rich DNA unwinding element (DUE), permitting loading of DNA polymerase. After initiation quickly degrades to an ADP-DnaA complex that is not apt for DNA replication. Binds acidic phospholipids. The protein is Chromosomal replication initiator protein DnaA of Klebsiella pneumoniae (strain 342).